Consider the following 114-residue polypeptide: NAD(P)H-quinone oxidoreductase subunit M (114 aa).

The protein belongs to the complex I NdhM subunit family. NDH-1 can be composed of about 15 different subunits; different subcomplexes with different compositions have been identified which probably have different functions.

The protein resides in the cellular thylakoid membrane. The enzyme catalyses a plastoquinone + NADH + (n+1) H(+)(in) = a plastoquinol + NAD(+) + n H(+)(out). The catalysed reaction is a plastoquinone + NADPH + (n+1) H(+)(in) = a plastoquinol + NADP(+) + n H(+)(out). Functionally, NDH-1 shuttles electrons from an unknown electron donor, via FMN and iron-sulfur (Fe-S) centers, to quinones in the respiratory and/or the photosynthetic chain. The immediate electron acceptor for the enzyme in this species is believed to be plastoquinone. Couples the redox reaction to proton translocation, and thus conserves the redox energy in a proton gradient. Cyanobacterial NDH-1 also plays a role in inorganic carbon-concentration. This Acaryochloris marina (strain MBIC 11017) protein is NAD(P)H-quinone oxidoreductase subunit M.